The primary structure comprises 278 residues: Pantothenate synthetase (278 aa).

27 to 34 contributes to the ATP binding site; it reads MGYLHEGH. Histidine 34 (proton donor) is an active-site residue. A (R)-pantoate-binding site is contributed by glutamine 58. Glutamine 58 is a binding site for beta-alanine. 144–147 contributes to the ATP binding site; the sequence is GQKD. (R)-pantoate is bound at residue glutamine 150. ATP-binding positions include valine 173 and 181–184; that span reads MSSR.

Belongs to the pantothenate synthetase family. As to quaternary structure, homodimer.

It localises to the cytoplasm. It carries out the reaction (R)-pantoate + beta-alanine + ATP = (R)-pantothenate + AMP + diphosphate + H(+). It participates in cofactor biosynthesis; (R)-pantothenate biosynthesis; (R)-pantothenate from (R)-pantoate and beta-alanine: step 1/1. Functionally, catalyzes the condensation of pantoate with beta-alanine in an ATP-dependent reaction via a pantoyl-adenylate intermediate. This chain is Pantothenate synthetase, found in Roseiflexus castenholzii (strain DSM 13941 / HLO8).